A 390-amino-acid polypeptide reads, in one-letter code: ATP-sensitive inward rectifier potassium channel 11 (390 aa).

Residues methionine 1–aspartate 65 are Cytoplasmic-facing. ATP-binding residues include asparagine 48 and arginine 50. The helical transmembrane segment at leucine 66–leucine 92 threads the bilayer. Residues isoleucine 93–serine 116 are Extracellular-facing. A disulfide bridge connects residues cysteine 110 and cysteine 142. An intramembrane region (discontinuously helical; Pore-forming) is located at residues phenylalanine 117 to phenylalanine 133. The K(+) site is built by threonine 130 and phenylalanine 133. A Selectivity filter motif is present at residues threonine 130 to glycine 135. Over glycine 134–cysteine 142 the chain is Extracellular. The chain crosses the membrane as a helical span at residues proline 143–threonine 171. Over alanine 172–serine 390 the chain is Cytoplasmic. Arginine 176 provides a ligand contact to a 1,2-diacyl-sn-glycero-3-phospho-(1D-myo-inositol-4,5-bisphosphate). Position 330 (tyrosine 330) interacts with ATP. A Phosphothreonine; by MAPK1 modification is found at threonine 341. Serine 385 is subject to Phosphoserine; by MAPK1.

Belongs to the inward rectifier-type potassium channel (TC 1.A.2.1) family. KCNJ11 subfamily. Homotetramer; the homotetramer binds four ATP molecules (one ATP per subunit). Forms an heterooctamer with ABCC8/SUR1; one KCNJ11 homotetramer interacts with four ABCC8/SUR1 molecules. Interacts with ABCC9/SUR2. In terms of processing, phosphorylation by MAPK1 results in changes in channel gating that destabilize the closed states and reduce the ATP sensitivity.

It localises to the membrane. It carries out the reaction K(+)(in) = K(+)(out). KATP channels are regulated by cytoplasmic ATP/ADP ratios; ATP inhibits the channel by closing the pore, while ADP activates the channel. Activated by phosphatidylinositol 4,5-biphosphate (PtdIns(4,5)P2). Functionally, inward rectifier potassium channel that forms the pore of ATP-sensitive potassium channels (KATP), regulating potassium permeability as a function of cytoplasmic ATP and ADP concentrations in many different cells. Inward rectifier potassium channels are characterized by a greater tendency to allow potassium to flow into the cell rather than out of it. Their voltage dependence is regulated by the concentration of extracellular potassium; as external potassium is raised, the voltage range of the channel opening shifts to more positive voltages. The inward rectification is mainly due to the blockage of outward current by internal magnesium. Can be blocked by extracellular barium. In pancreatic cells, it forms KATP channels with ABCC8/SUR1. Can form cardiac and smooth muscle-type KATP channels with ABCC9. In Homo sapiens (Human), this protein is ATP-sensitive inward rectifier potassium channel 11 (KCNJ11).